The following is a 502-amino-acid chain: TGF-beta-activated kinase 1 and MAP3K7-binding protein 1 (502 aa).

The disordered stretch occupies residues M1–L21. Residue S7 is modified to Phosphoserine. Polar residues predominate over residues S7–W17. Positions G28–F365 constitute a PPM-type phosphatase domain. The O-linked (GlcNAc) serine glycan is linked to S393. Residues Q414 to P437 are compositionally biased toward polar residues. Residues Q414–V476 are disordered. The residue at position 421 (S421) is a Phosphoserine. A Phosphothreonine modification is found at T429. S436 bears the Phosphoserine mark. Residues T438–S455 are compositionally biased toward low complexity. Phosphothreonine is present on T440.

Interacts with XIAP and BIRC7. Interacts with TRAF6 and MAP3K7; during IL-1 signaling. Identified in the TRIKA2 complex composed of MAP3K7, TAB1 and TAB2. Interacts with TRAF6 and MAPK14; these interactions allow MAPK14 autophosphorylation. Interacts with STING1; interaction takes place following cGAMP activation and promotes TAB1 recruitment to the endoplasmic reticulum, triggering MAP3K7/TAK1 activation and STING1 phosphorylation. In terms of processing, phosphorylated at all three sites Ser-421, Thr-429 and Ser-436 by MAPK14 when cells were exposed to cellular stresses, or stimulated with TNF-alpha, IL1 or LPS. These phosphorylations inhibit TAK1 activation by a feedback control mechanism. Dephosphorylated by DUSP14 at Ser-436, leading to TAB1-MAP3K7/TAK1 complex inactivation in T-cells. Post-translationally, ubiquitinated by MAP3K1 with 'Lys-63'-linked polyubiquitin; leading to activation of TAK1 and of JNK and p38 MAP kinases following EGF and TGF-beta stimulation. Ubiquitinated by ITCH with 'Lys-48'-linked polyubiquitin; leading to proteasomal degradation. Ubiquitinated by RNF114 during maternal-to-zygotic transition; leading to degradation. O-GlcNAcylated at Ser-393 is required for full MAP3K7/TAK1 activation upon stimulation with IL-1 or osmotic stress.

Its subcellular location is the cytoplasm. The protein resides in the cytosol. It is found in the endoplasmic reticulum membrane. Its function is as follows. Key adapter protein that plays an essential role in JNK and NF-kappa-B activation and proinflammatory cytokines production in response to stimulation with TLRs and cytokines. Mechanistically, associates with the catalytic domain of MAP3K7/TAK1 to trigger MAP3K7/TAK1 autophosphorylation leading to its full activation. Similarly, associates with MAPK14 and triggers its autophosphorylation and subsequent activation. In turn, MAPK14 phosphorylates TAB1 and inhibits MAP3K7/TAK1 activation in a feedback control mechanism. Also plays a role in recruiting MAPK14 to the TAK1 complex for the phosphorylation of the TAB2 and TAB3 regulatory subunits. This Mus musculus (Mouse) protein is TGF-beta-activated kinase 1 and MAP3K7-binding protein 1 (Tab1).